The chain runs to 794 residues: Ent-copalyl diphosphate synthase 2 (794 aa).

The transit peptide at 1–35 directs the protein to the chloroplast; that stretch reads MSSSSNVTSLPRLTTAGGVFPREMVRVHSSCNILR. Lys-238 contacts substrate. Asp-369 and Asp-371 together coordinate Mg(2+). The short motif at 369–372 is the DXDD motif element; sequence DVDD. Lys-455 contributes to the substrate binding site.

The protein belongs to the terpene synthase family. Tpsc subfamily. Requires Mg(2+) as cofactor. As to expression, expressed in leaves.

The protein resides in the plastid. The protein localises to the chloroplast. It carries out the reaction (2E,6E,10E)-geranylgeranyl diphosphate = ent-copalyl diphosphate. The protein operates within secondary metabolite biosynthesis; terpenoid biosynthesis. Functionally, involved in the biosynthesis of ent-kaurene diterpenoids natural products such as oridonin, miltiradiene, eriocalyxin B and nezukol, known to exhibit antitumor, anti-inflammatory and antibacterial activities. Catalyzes the conversion of (2E,6E,10E)-geranylgeranyl diphosphate (GGPP) to ent-copalyl diphosphate (ent-CPP). The chain is Ent-copalyl diphosphate synthase 2 from Isodon eriocalyx (Plectranthus eriocalyx).